A 99-amino-acid polypeptide reads, in one-letter code: Large ribosomal subunit protein bL28 (99 aa).

Belongs to the bacterial ribosomal protein bL28 family.

In Rhodospirillum rubrum (strain ATCC 11170 / ATH 1.1.1 / DSM 467 / LMG 4362 / NCIMB 8255 / S1), this protein is Large ribosomal subunit protein bL28.